The sequence spans 271 residues: tRNA (guanine-N(7)-)-methyltransferase (271 aa).

A disordered region spans residues Met-1–Arg-52. Basic and acidic residues predominate over residues Ala-20 to Lys-31. S-adenosyl-L-methionine contacts are provided by Glu-93, Asp-118, Asp-145, and Asp-168. Asp-168 is an active-site residue. Substrate contacts are provided by residues Lys-172, Asp-204, and Thr-241–Glu-244.

The protein belongs to the class I-like SAM-binding methyltransferase superfamily. TrmB family.

It catalyses the reaction guanosine(46) in tRNA + S-adenosyl-L-methionine = N(7)-methylguanosine(46) in tRNA + S-adenosyl-L-homocysteine. The protein operates within tRNA modification; N(7)-methylguanine-tRNA biosynthesis. Its function is as follows. Catalyzes the formation of N(7)-methylguanine at position 46 (m7G46) in tRNA. This chain is tRNA (guanine-N(7)-)-methyltransferase, found in Streptomyces coelicolor (strain ATCC BAA-471 / A3(2) / M145).